We begin with the raw amino-acid sequence, 200 residues long: Lipid A acyltransferase PagP (200 aa).

An N-terminal signal peptide occupies residues 1–24 (MRLKLTSHTCLFALSSLLVTPAFA). Active-site residues include His-72, Asp-115, and Ser-116.

Belongs to the lipid A palmitoyltransferase family. In terms of assembly, homodimer.

Its subcellular location is the cell outer membrane. The catalysed reaction is a lipid A + a 1,2-diacyl-sn-glycero-3-phosphocholine = a hepta-acyl lipid A + a 2-acyl-sn-glycero-3-phosphocholine. The enzyme catalyses a lipid IVA + a 1,2-diacyl-sn-glycero-3-phosphocholine = a lipid IVB + a 2-acyl-sn-glycero-3-phosphocholine. It catalyses the reaction a lipid IIA + a 1,2-diacyl-sn-glycero-3-phosphocholine = a lipid IIB + a 2-acyl-sn-glycero-3-phosphocholine. Transfers a fatty acid residue from the sn-1 position of a phospholipid to the N-linked hydroxyfatty acid chain on the proximal unit of lipid A or its precursors. This Dickeya dadantii (strain 3937) (Erwinia chrysanthemi (strain 3937)) protein is Lipid A acyltransferase PagP.